A 242-amino-acid polypeptide reads, in one-letter code: Pyridoxine 5'-phosphate synthase (242 aa).

Position 7 (asparagine 7) interacts with 3-amino-2-oxopropyl phosphate. Position 9–10 (9–10 (DH)) interacts with 1-deoxy-D-xylulose 5-phosphate. Arginine 18 is a 3-amino-2-oxopropyl phosphate binding site. Histidine 44 (proton acceptor) is an active-site residue. 2 residues coordinate 1-deoxy-D-xylulose 5-phosphate: arginine 46 and histidine 51. Residue glutamate 71 is the Proton acceptor of the active site. 1-deoxy-D-xylulose 5-phosphate is bound at residue threonine 101. Histidine 192 serves as the catalytic Proton donor. Residues glycine 193 and 214–215 (GH) contribute to the 3-amino-2-oxopropyl phosphate site.

It belongs to the PNP synthase family. Homooctamer; tetramer of dimers.

It is found in the cytoplasm. The enzyme catalyses 3-amino-2-oxopropyl phosphate + 1-deoxy-D-xylulose 5-phosphate = pyridoxine 5'-phosphate + phosphate + 2 H2O + H(+). Its pathway is cofactor biosynthesis; pyridoxine 5'-phosphate biosynthesis; pyridoxine 5'-phosphate from D-erythrose 4-phosphate: step 5/5. In terms of biological role, catalyzes the complicated ring closure reaction between the two acyclic compounds 1-deoxy-D-xylulose-5-phosphate (DXP) and 3-amino-2-oxopropyl phosphate (1-amino-acetone-3-phosphate or AAP) to form pyridoxine 5'-phosphate (PNP) and inorganic phosphate. The sequence is that of Pyridoxine 5'-phosphate synthase from Synechocystis sp. (strain ATCC 27184 / PCC 6803 / Kazusa).